Consider the following 746-residue polypeptide: NAD(P)H-quinone oxidoreductase subunit 5, chloroplastic (746 aa).

15 consecutive transmembrane segments (helical) span residues 9–29 (WIIP…LLLV), 40–60 (WTFP…NLSI), 89–109 (IDPL…MVLI), 122–139 (LRFF…LGLV), 147–167 (IYIF…FWFT), 185–205 (GDFG…SFEF), 219–239 (NGVN…GAVA), 258–278 (TPIS…FLVA), 280–300 (LLPL…IGVI), 327–347 (LGYI…FHLI), 396–416 (TTFL…CFWS), 425–445 (WLYS…TAFY), 546–566 (LLPL…GIPF), 605–625 (IYSV…YGSI), and 722–742 (YLFV…FYFF).

It belongs to the complex I subunit 5 family. NDH is composed of at least 16 different subunits, 5 of which are encoded in the nucleus.

The protein localises to the plastid. It is found in the chloroplast thylakoid membrane. It catalyses the reaction a plastoquinone + NADH + (n+1) H(+)(in) = a plastoquinol + NAD(+) + n H(+)(out). It carries out the reaction a plastoquinone + NADPH + (n+1) H(+)(in) = a plastoquinol + NADP(+) + n H(+)(out). Its function is as follows. NDH shuttles electrons from NAD(P)H:plastoquinone, via FMN and iron-sulfur (Fe-S) centers, to quinones in the photosynthetic chain and possibly in a chloroplast respiratory chain. The immediate electron acceptor for the enzyme in this species is believed to be plastoquinone. Couples the redox reaction to proton translocation, and thus conserves the redox energy in a proton gradient. The protein is NAD(P)H-quinone oxidoreductase subunit 5, chloroplastic (ndhF) of Calycanthus floridus var. glaucus (Eastern sweetshrub).